A 344-amino-acid chain; its full sequence is Laforin, isoform 9 (344 aa).

Disordered stretches follow at residues 1 to 44 (MHPK…PGPG), 58 to 134 (GGGA…PRGH), 158 to 188 (PAPG…RRAS), and 320 to 344 (SLKK…QCAT). The span at 77 to 88 (AARAGALGAARC) shows a compositional bias: low complexity. The segment covering 101-131 (RGPGPAGAGPVARGGGAGGRGGGAGRGGAGP) has biased composition (gly residues). The segment covering 179-188 (RPRRPRRRAS) has biased composition (basic residues).

Interacts with isoform 1 and isoform 2.

Its subcellular location is the nucleus. This Homo sapiens (Human) protein is Laforin, isoform 9.